The primary structure comprises 310 residues: Tetrahydromethanopterin S-methyltransferase subunit H (310 aa).

It belongs to the MtrH family. As to quaternary structure, the complex is composed of 8 subunits; MtrA, MtrB, MtrC, MtrD, MtrE, MtrF, MtrG and MtrH.

The catalysed reaction is 5-methyl-5,6,7,8-tetrahydromethanopterin + coenzyme M + 2 Na(+)(in) = 5,6,7,8-tetrahydromethanopterin + methyl-coenzyme M + 2 Na(+)(out). It functions in the pathway one-carbon metabolism; methanogenesis from CO(2); methyl-coenzyme M from 5,10-methylene-5,6,7,8-tetrahydromethanopterin: step 2/2. Its function is as follows. Part of a complex that catalyzes the formation of methyl-coenzyme M and tetrahydromethanopterin from coenzyme M and methyl-tetrahydromethanopterin. This is an energy-conserving, sodium-ion translocating step. MtrH catalyzes the transfer of the methyl group from methyl-tetrahydromethanopterin to the corrinoid prosthetic group of MtrA. This Methanothermobacter thermautotrophicus (strain ATCC 29096 / DSM 1053 / JCM 10044 / NBRC 100330 / Delta H) (Methanobacterium thermoautotrophicum) protein is Tetrahydromethanopterin S-methyltransferase subunit H.